Here is a 212-residue protein sequence, read N- to C-terminus: ATP-dependent dethiobiotin synthetase BioD (212 aa).

12–17 is a binding site for ATP; that stretch reads DCGKTF. Thr16 provides a ligand contact to Mg(2+). Lys33 is a catalytic residue. A substrate-binding site is contributed by Ser37. ATP-binding positions include Asp50, 110–113, and 170–171; these read EGAG and NC. Mg(2+)-binding residues include Asp50 and Glu110.

Belongs to the dethiobiotin synthetase family. Homodimer. Requires Mg(2+) as cofactor.

Its subcellular location is the cytoplasm. It catalyses the reaction (7R,8S)-7,8-diammoniononanoate + CO2 + ATP = (4R,5S)-dethiobiotin + ADP + phosphate + 3 H(+). The protein operates within cofactor biosynthesis; biotin biosynthesis; biotin from 7,8-diaminononanoate: step 1/2. Functionally, catalyzes a mechanistically unusual reaction, the ATP-dependent insertion of CO2 between the N7 and N8 nitrogen atoms of 7,8-diaminopelargonic acid (DAPA, also called 7,8-diammoniononanoate) to form a ureido ring. This Legionella pneumophila (strain Lens) protein is ATP-dependent dethiobiotin synthetase BioD.